A 413-amino-acid chain; its full sequence is Ribulose bisphosphate carboxylase/oxygenase activase, chloroplastic (413 aa).

The transit peptide at 1–54 (MAATVSTIGAVNRTTLNNSNYGGLVPNSAFLGSRLKVSSRFTTSKMVTGNFKIV) directs the protein to the chloroplast. 162–169 (GGKGQGKS) is a binding site for ATP.

This sequence belongs to the RuBisCO activase family.

Its subcellular location is the plastid. It localises to the chloroplast stroma. Activation of RuBisCO (ribulose-1,5-bisphosphate carboxylase/oxygenase; EC 4.1.1.39) involves the ATP-dependent carboxylation of the epsilon-amino group of lysine leading to a carbamate structure. The chain is Ribulose bisphosphate carboxylase/oxygenase activase, chloroplastic from Cucumis sativus (Cucumber).